The sequence spans 2771 residues: Kinesin-like protein KIN-12D (2771 aa).

Basic and acidic residues-rich tracts occupy residues 1–13 and 40–54; these read MSKETKLSRRDSD and KNPKHECGSKIDRTP. 2 disordered regions span residues 1-73 and 117-139; these read MSKE…TPDK and YSETNSTQNTPTKSVSKPPGSCY. The span at 118–131 shows a compositional bias: polar residues; sequence SETNSTQNTPTKSV. Residues 193-530 form the Kinesin motor domain; sequence NVQILIRVRP…LKFAQRAKLI (338 aa). An ATP-binding site is contributed by 274-281; the sequence is GQTGSGKT. Microtubules-binding regions lie at residues 400–404, 431–437, and 479–483; these read SSRSH, VDLAGSE, and HIPYR. 5 coiled-coil regions span residues 1033-1110, 1267-1331, 1410-1505, 2108-2390, and 2512-2677; these read AATA…NEME, ELKQ…MKEK, IILL…YVEN, ELED…EQVK, and RERD…LAQE. Residues 2727 to 2736 show a composition bias toward basic residues; it reads LKGKAKSRRS. The tract at residues 2727-2771 is disordered; that stretch reads LKGKAKSRRSRNPERKMPSMPSPRRSWSQSPRSMSQVPFFSSLDR. Residues 2744 to 2762 are compositionally biased toward low complexity; it reads PSMPSPRRSWSQSPRSMSQ.

It belongs to the TRAFAC class myosin-kinesin ATPase superfamily. Kinesin family. KIN-12 subfamily. Expressed in tissues enriched in dividing cells, such as root meristems, root primordia, and leaf primordia/young leaves.

Its subcellular location is the cytoplasm. It is found in the cytoskeleton. The protein localises to the phragmoplast. Functionally, involved in the spatial control of cytokinesis by a proper phragmoplast guidance. The polypeptide is Kinesin-like protein KIN-12D (Arabidopsis thaliana (Mouse-ear cress)).